Consider the following 555-residue polypeptide: Dynein regulatory complex protein 11 (555 aa).

IQ domains lie at 154–183 and 199–226; these read EDEAILMIQKNERGRQARERARLAAITKRQ and HEEAARKIQAAIRGFLWRRRIKKEADKE. Disordered stretches follow at residues 232 to 255, 299 to 377, 450 to 469, and 501 to 555; these read MKPKPRDPKRDPQMGEAKNLMRRK, KRNP…EQKI, AAKLGKKGKKKKGKKKEPFS, and AKKD…SCGA. 2 stretches are compositionally biased toward basic and acidic residues: residues 235 to 244 and 338 to 367; these read KPRDPKRDPQ and GDGKGKGKDGKGDAKKDAKKDPKKDKKGGG. Residues 452-464 show a composition bias toward basic residues; that stretch reads KLGKKGKKKKGKK. Over residues 501–521 the composition is skewed to basic and acidic residues; sequence AKKDEKDAAGDGKGKGKDGKG. Residues 537 to 546 are compositionally biased toward basic residues; the sequence is KKKKGGKKKS.

The protein belongs to the AAA ATPase family. DRC11 subfamily. In terms of assembly, component of the nexin-dynein regulatory complex (N-DRC). Interacts with DRC5.

It is found in the cytoplasm. The protein localises to the cytoskeleton. It localises to the flagellum axoneme. In terms of biological role, component of the nexin-dynein regulatory complex (N-DRC), a key regulator of ciliary/flagellar motility which maintains the alignment and integrity of the distal axoneme and regulates microtubule sliding in motile axonemes. The polypeptide is Dynein regulatory complex protein 11 (Chlamydomonas reinhardtii (Chlamydomonas smithii)).